Consider the following 183-residue polypeptide: Adenine phosphoribosyltransferase (183 aa).

Belongs to the purine/pyrimidine phosphoribosyltransferase family. As to quaternary structure, homodimer.

The protein localises to the cytoplasm. It catalyses the reaction AMP + diphosphate = 5-phospho-alpha-D-ribose 1-diphosphate + adenine. It participates in purine metabolism; AMP biosynthesis via salvage pathway; AMP from adenine: step 1/1. In terms of biological role, catalyzes a salvage reaction resulting in the formation of AMP, that is energically less costly than de novo synthesis. This Shewanella sp. (strain ANA-3) protein is Adenine phosphoribosyltransferase.